A 128-amino-acid chain; its full sequence is Cyclin-dependent protein kinase inhibitor SMR1 (128 aa).

The disordered stretch occupies residues 17–74 (PIKIRSKTSKTKKDEGDDDEDDLRCSTPTSQEHKIPAVVDSPPPPPRKPRPPPSAPSA). Residues 57–71 (SPPPPPRKPRPPPSA) show a composition bias toward pro residues.

As to quaternary structure, interacts with CDKB1-1. Interacts with CPR5. As to expression, expressed in roots, leaves, stems, siliques and flowers. Expressed in the root elongation zone.

The protein localises to the nucleus. Its function is as follows. Probable cyclin-dependent protein kinase (CDK) inhibitor that functions as a repressor of mitosis in the endoreduplication cell cycle. Cooperates with SIM and SMR2 to promote endoreplication during leaf development. Specifically regulates endoreduplication in epidermal pavement cells to produce the cell size pattern. Is necessary for giant cell formation. Positive regulator of effector-triggered immunity (ETI). The polypeptide is Cyclin-dependent protein kinase inhibitor SMR1 (Arabidopsis thaliana (Mouse-ear cress)).